The following is a 357-amino-acid chain: Membrane-bound lytic murein transglycosylase C (357 aa).

The signal sequence occupies residues 1 to 16; the sequence is MKKILPLVIIAPLLIS. Cys17 carries the N-palmitoyl cysteine lipid modification. The S-diacylglycerol cysteine moiety is linked to residue Cys17.

It belongs to the transglycosylase Slt family.

The protein localises to the cell outer membrane. The catalysed reaction is Exolytic cleavage of the (1-&gt;4)-beta-glycosidic linkage between N-acetylmuramic acid (MurNAc) and N-acetylglucosamine (GlcNAc) residues in peptidoglycan, from either the reducing or the non-reducing ends of the peptidoglycan chains, with concomitant formation of a 1,6-anhydrobond in the MurNAc residue.. Murein-degrading enzyme. May play a role in recycling of muropeptides during cell elongation and/or cell division. The protein is Membrane-bound lytic murein transglycosylase C of Sodalis glossinidius (strain morsitans).